The primary structure comprises 397 residues: MTTLLNPYFGEFGGMYVPQILMPALRQLEEAFVSAQKDPEFQAQFNDLLKNYAGRPTALTKCQNITAGTNTTLYLKREDLLHGGAHKTNQVLGQALLAKRMGKTKIIAETGAGQHGVASALASALLGLKCRIYMGAKDVERQSPNVFRMRLMGAEVIPVHSGSATLKDACNEALRDWSGSYETAHYMLGTAAGPHPYPTIVREFQRMIGEETKAQILEREGRLPDAVIACVGGGSNAIGMFADFINETDVGLIGVEPGGHGIETGEHGAPLKHGRVGIYFGMKAPMMQTEDGQIEESYSISAGLDFPSVGPQHAYLNSTGRADYVSITDDEALEAFKTLCLHEGIIPALESSHALAHALKMMRENPEKEQLLVVNLSGRGDKDIFTVHDILKARGEI.

K87 is subject to N6-(pyridoxal phosphate)lysine.

This sequence belongs to the TrpB family. Tetramer of two alpha and two beta chains. The cofactor is pyridoxal 5'-phosphate.

It carries out the reaction (1S,2R)-1-C-(indol-3-yl)glycerol 3-phosphate + L-serine = D-glyceraldehyde 3-phosphate + L-tryptophan + H2O. It functions in the pathway amino-acid biosynthesis; L-tryptophan biosynthesis; L-tryptophan from chorismate: step 5/5. Its function is as follows. The beta subunit is responsible for the synthesis of L-tryptophan from indole and L-serine. The sequence is that of Tryptophan synthase beta chain from Escherichia coli O45:K1 (strain S88 / ExPEC).